The following is a 113-amino-acid chain: T cell receptor alpha variable 8-6 (113 aa).

The first 20 residues, 1 to 20, serve as a signal peptide directing secretion; sequence MLLLLVPAFQVIFTLGGTRA. An Ig-like domain is found at 21-113; that stretch reads QSVTQLDSQV…DTAEYFCAVS (93 aa). An intrachain disulfide couples Cys42 to Cys110. N-linked (GlcNAc...) asparagine glycans are attached at residues Asn43 and Asn87.

As to quaternary structure, alpha-beta TR is a heterodimer composed of an alpha and beta chain; disulfide-linked. The alpha-beta TR is associated with the transmembrane signaling CD3 coreceptor proteins to form the TR-CD3 (TcR or TCR). The assembly of alpha-beta TR heterodimers with CD3 occurs in the endoplasmic reticulum where a single alpha-beta TR heterodimer associates with one CD3D-CD3E heterodimer, one CD3G-CD3E heterodimer and one CD247 homodimer forming a stable octameric structure. CD3D-CD3E and CD3G-CD3E heterodimers preferentially associate with TR alpha and TR beta chains, respectively. The association of the CD247 homodimer is the last step of TcR assembly in the endoplasmic reticulum and is required for transport to the cell surface.

It is found in the cell membrane. Functionally, v region of the variable domain of T cell receptor (TR) alpha chain that participates in the antigen recognition. Alpha-beta T cell receptors are antigen specific receptors which are essential to the immune response and are present on the cell surface of T lymphocytes. Recognize peptide-major histocompatibility (MH) (pMH) complexes that are displayed by antigen presenting cells (APC), a prerequisite for efficient T cell adaptive immunity against pathogens. Binding of alpha-beta TR to pMH complex initiates TR-CD3 clustering on the cell surface and intracellular activation of LCK that phosphorylates the ITAM motifs of CD3G, CD3D, CD3E and CD247 enabling the recruitment of ZAP70. In turn ZAP70 phosphorylates LAT, which recruits numerous signaling molecules to form the LAT signalosome. The LAT signalosome propagates signal branching to three major signaling pathways, the calcium, the mitogen-activated protein kinase (MAPK) kinase and the nuclear factor NF-kappa-B (NF-kB) pathways, leading to the mobilization of transcription factors that are critical for gene expression and essential for T cell growth and differentiation. The T cell repertoire is generated in the thymus, by V-(D)-J rearrangement. This repertoire is then shaped by intrathymic selection events to generate a peripheral T cell pool of self-MH restricted, non-autoaggressive T cells. Post-thymic interaction of alpha-beta TR with the pMH complexes shapes TR structural and functional avidity. This is T cell receptor alpha variable 8-6 from Homo sapiens (Human).